The following is a 384-amino-acid chain: S-adenosylmethionine synthase (384 aa).

Residue H15 participates in ATP binding. D17 lines the Mg(2+) pocket. E43 contributes to the K(+) binding site. Positions 56 and 99 each coordinate L-methionine. The interval 99-109 (QSPDINQGVDR) is flexible loop. Residues 164-166 (DAK), 230-231 (RF), D239, 245-246 (RK), A262, and K266 contribute to the ATP site. D239 is an L-methionine binding site. L-methionine is bound at residue K270.

This sequence belongs to the AdoMet synthase family. As to quaternary structure, homotetramer; dimer of dimers. Requires Mg(2+) as cofactor. K(+) serves as cofactor.

It localises to the cytoplasm. The catalysed reaction is L-methionine + ATP + H2O = S-adenosyl-L-methionine + phosphate + diphosphate. It functions in the pathway amino-acid biosynthesis; S-adenosyl-L-methionine biosynthesis; S-adenosyl-L-methionine from L-methionine: step 1/1. Its function is as follows. Catalyzes the formation of S-adenosylmethionine (AdoMet) from methionine and ATP. The overall synthetic reaction is composed of two sequential steps, AdoMet formation and the subsequent tripolyphosphate hydrolysis which occurs prior to release of AdoMet from the enzyme. The protein is S-adenosylmethionine synthase of Serratia proteamaculans (strain 568).